The primary structure comprises 280 residues: Protein MGF 505-3R (280 aa).

The protein belongs to the asfivirus MGF 505 family.

Plays a role in virus cell tropism, and may be required for efficient virus replication in macrophages. This is Protein MGF 505-3R from African swine fever virus (isolate Warthog/Namibia/Wart80/1980) (ASFV).